The primary structure comprises 274 residues: Large ribosomal subunit protein uL2cz/uL2cy (274 aa).

Disordered regions lie at residues 1–25 and 224–274; these read MAIHLYKTSTPSTRNGAVDSQVKSN and NPVD…RRSK.

It belongs to the universal ribosomal protein uL2 family. In terms of assembly, part of the 50S ribosomal subunit.

The protein localises to the plastid. The protein resides in the chloroplast. The protein is Large ribosomal subunit protein uL2cz/uL2cy (rpl2-A) of Aethionema cordifolium (Lebanon stonecress).